The sequence spans 271 residues: Cell division protein FtsQ (271 aa).

A disordered region spans residues 1–37 (MAAGPTTAEKSGASGAKRSSKGSSDGPSRPGTRNRKF). Residues 1–43 (MAAGPTTAEKSGASGAKRSSKGSSDGPSRPGTRNRKFRMPGTR) lie on the Cytoplasmic side of the membrane. Low complexity predominate over residues 8–24 (AEKSGASGAKRSSKGSS). Residues 44-64 (ALLITLGVLLLVAGGLWALYG) form a helical membrane-spanning segment. At 65–271 (STWFRVERVK…APTAPASSGS (207 aa)) the chain is on the extracellular side. In terms of domain architecture, POTRA spans 68 to 137 (FRVERVKTSG…HGIGLKVTER (70 aa)).

It belongs to the FtsQ/DivIB family. FtsQ subfamily.

The protein resides in the cell membrane. In terms of biological role, essential cell division protein. This is Cell division protein FtsQ from Streptomyces venezuelae (strain ATCC 10712 / CBS 650.69 / DSM 40230 / JCM 4526 / NBRC 13096 / PD 04745).